The chain runs to 412 residues: Argininosuccinate synthase (412 aa).

Residues 20 to 28 and Ala48 contribute to the ATP site; that span reads AYSGGLDTS. Residues Tyr100 and Ser105 each coordinate L-citrulline. Gly130 contributes to the ATP binding site. L-aspartate is bound by residues Thr132, Asn136, and Asp137. Residue Asn136 coordinates L-citrulline. Arg140, Ser189, Ser198, Glu274, and Tyr286 together coordinate L-citrulline.

Belongs to the argininosuccinate synthase family. Type 1 subfamily. Homotetramer.

It is found in the cytoplasm. The enzyme catalyses L-citrulline + L-aspartate + ATP = 2-(N(omega)-L-arginino)succinate + AMP + diphosphate + H(+). The protein operates within amino-acid biosynthesis; L-arginine biosynthesis; L-arginine from L-ornithine and carbamoyl phosphate: step 2/3. This Shewanella halifaxensis (strain HAW-EB4) protein is Argininosuccinate synthase.